The chain runs to 486 residues: ATP synthase subunit beta (486 aa).

171 to 178 (GGAGVGKT) is a binding site for ATP.

The protein belongs to the ATPase alpha/beta chains family. As to quaternary structure, F-type ATPases have 2 components, CF(1) - the catalytic core - and CF(0) - the membrane proton channel. CF(1) has five subunits: alpha(3), beta(3), gamma(1), delta(1), epsilon(1). CF(0) has three main subunits: a(1), b(2) and c(9-12). The alpha and beta chains form an alternating ring which encloses part of the gamma chain. CF(1) is attached to CF(0) by a central stalk formed by the gamma and epsilon chains, while a peripheral stalk is formed by the delta and b chains.

It is found in the cell membrane. It catalyses the reaction ATP + H2O + 4 H(+)(in) = ADP + phosphate + 5 H(+)(out). In terms of biological role, produces ATP from ADP in the presence of a proton gradient across the membrane. The catalytic sites are hosted primarily by the beta subunits. The chain is ATP synthase subunit beta from Salinispora tropica (strain ATCC BAA-916 / DSM 44818 / JCM 13857 / NBRC 105044 / CNB-440).